The following is a 347-amino-acid chain: MEIDMADKTNKFKTDIERKQFESLPWVEKYRPKNLDDLIAHEDITQTITKLIDNNTLPHLLFYGPPGTGKTSTIQAIARKLYGDNYSRMVLELNASDDRGIDVVREQIKTFASSMFFFNTTVPYKLIILDEADSMTNIAQTALRRVIEKYTKTTRFCIVCNYVIKIIPALQSRCTRFRFSPLPTPPTEIRLKEIIEKENVKVDSKAMNAVLELGCGDMRKCLNILQSVSMSSIDNNITEEAIYKCTGYPMPSDIELMVDWLLNSDYEEAFQNISDLKKKKGLSLNDIIATLQKFVVQIDLDNVILCKLLSHLSDIEYNLSIGSSEKLQLGSLVGCFQLSRDDELLHN.

An ATP-binding site is contributed by 64–71 (GPPGTGKT).

This sequence belongs to the activator 1 small subunits family. Heteropentamer of various rfc subunits that forms a complex (RFC) with PCNA in the presence of ATP.

The protein resides in the nucleus. Its function is as follows. The elongation of primed DNA templates by DNA polymerase delta and epsilon requires the action of the accessory proteins PCNA and activator 1. In Dictyostelium discoideum (Social amoeba), this protein is Probable replication factor C subunit 5 (rfc5).